We begin with the raw amino-acid sequence, 210 residues long: Kalata-B2 (210 aa).

Residues 1-22 form the signal peptide; the sequence is MAKFTNCLVLSLLLAAFVGAFG. Positions 23-66 are excised as a propeptide; sequence AEFSEADKATLVNDIAENIQKEILGEVKTSETVLTMFLKEMQLK. The cyclopeptide (Gly-Asp) cross-link spans 67-95; sequence GLPVCGETCFGGTCNTPGCSCTWPICTRD. 3 disulfides stabilise this stretch: Cys71/Cys85, Cys75/Cys87, and Cys80/Cys92. The propeptide occupies 96-120; sequence SLPMRAGGKTSETTLHMFLKEMQLK. Positions 121-149 form a cross-link, cyclopeptide (Gly-Asp); sequence GLPVCGETCFGGTCNTPGCSCTWPICTRD. Intrachain disulfides connect Cys125-Cys139, Cys129-Cys141, and Cys134-Cys146. The propeptide occupies 150–174; it reads SLPMSAGGKTSETTLHMFLKEMQLK. A cross-link (cyclopeptide (Gly-Asp)) is located at residues 175–203; that stretch reads GLPVCGETCFGGTCNTPGCSCTWPICTRD. Disulfide bonds link Cys179–Cys193, Cys183–Cys195, and Cys188–Cys200. A propeptide spanning residues 204 to 210 is cleaved from the precursor; sequence SLPLVAA.

The protein belongs to the cyclotide family. Moebius subfamily. In terms of processing, kalata-B2 is a cyclic peptide which occurs in three forms: with unmodified Trp, with Trp oxidized to form N-formylkynurenine and with Trp oxidized to form kynurenine. Oxidation is enhanced by exposure to sunlight.

Its function is as follows. Probably participates in a plant defense mechanism. Inhibitory effect on the growth and development of larvae from Helicoverpa punctigera. Has hemolytic activity. In Oldenlandia affinis, this protein is Kalata-B2 (OAK4).